A 293-amino-acid chain; its full sequence is RNA-binding Raly-like protein (293 aa).

The region spanning serine 21–glutamate 92 is the RRM domain. 2 disordered regions span residues proline 159–serine 195 and glutamine 245–lysine 293. Residues lysine 176 to lysine 192 are compositionally biased toward low complexity. A coiled-coil region spans residues lysine 192–aspartate 254. Acidic residues predominate over residues glutamate 259–glycine 284.

It belongs to the RRM HNRPC family. RALY subfamily.

The polypeptide is RNA-binding Raly-like protein (RALYL) (Bos taurus (Bovine)).